Here is an 858-residue protein sequence, read N- to C-terminus: Bifunctional uridylyltransferase/uridylyl-removing enzyme (858 aa).

Residues 1-324 (MSAHAAPSPE…PATSGITRVL (324 aa)) form a uridylyltransferase region. Residues 325 to 681 (SADRFVEKQG…ARPSPIGDAL (357 aa)) form a uridylyl-removing region. An HD domain is found at 443-565 (VDQHILMVLR…VGNERYLTAL (123 aa)). ACT domains lie at 682 to 763 (QVLV…PSKG) and 790 to 858 (ILSV…AIAV).

It belongs to the GlnD family. The cofactor is Mg(2+).

The catalysed reaction is [protein-PII]-L-tyrosine + UTP = [protein-PII]-uridylyl-L-tyrosine + diphosphate. It carries out the reaction [protein-PII]-uridylyl-L-tyrosine + H2O = [protein-PII]-L-tyrosine + UMP + H(+). Its activity is regulated as follows. Uridylyltransferase (UTase) activity is inhibited by glutamine, while glutamine activates uridylyl-removing (UR) activity. Its function is as follows. Modifies, by uridylylation and deuridylylation, the PII regulatory proteins (GlnB and homologs), in response to the nitrogen status of the cell that GlnD senses through the glutamine level. Under low glutamine levels, catalyzes the conversion of the PII proteins and UTP to PII-UMP and PPi, while under higher glutamine levels, GlnD hydrolyzes PII-UMP to PII and UMP (deuridylylation). Thus, controls uridylylation state and activity of the PII proteins, and plays an important role in the regulation of nitrogen assimilation and metabolism. The protein is Bifunctional uridylyltransferase/uridylyl-removing enzyme of Burkholderia orbicola (strain MC0-3).